The chain runs to 686 residues: Probable serine/threonine-protein kinase pdkA (686 aa).

The interval 1–31 is disordered; it reads MENIVITNTSGGGGGGVPSSSTDPPNNTTTT. Positions 18–31 are enriched in low complexity; that stretch reads PSSSTDPPNNTTTT. The 381-residue stretch at 69 to 449 folds into the Protein kinase domain; that stretch reads FIIGKVLGEG…FDNLKAHPFF (381 aa). Residues 79-81 and Lys98 contribute to the ATP site; that span reads SYG. Residues 100 to 144 form a PIF-pocket region; that stretch reads LEKKQIIKENKIKYVQIEKEIFCKSNHPNIVKLFFTFRSEQCLYY. ATP contacts are provided by residues 147 to 149 and Asp153; that span reads ELC. The active-site Proton acceptor is the Asp192. ATP-binding residues include Glu196 and Asp210. Disordered regions lie at residues 211-321 and 481-584; these read FGTG…NTNT and LFSP…NNIS. Positions 222 to 257 are enriched in low complexity; the sequence is SSQQQQQQQQQQQQLPTNSSGNLSSLLNNVNNLSVS. The segment covering 258 to 267 has biased composition (polar residues); the sequence is TDLTQQQQNR. Composition is skewed to low complexity over residues 268–279, 288–321, and 503–568; these read TSSVDSASTTDS, TTTTTNNNNNNNNNNNNNNNNTAAGSNTNTNTNT, and NSCN…QRSG. Residues 593 to 682 enclose the PH domain; sequence VIYQGLVWKR…DSIKSVILSS (90 aa).

It belongs to the protein kinase superfamily. AGC Ser/Thr protein kinase family. PDPK1 subfamily.

The enzyme catalyses L-seryl-[protein] + ATP = O-phospho-L-seryl-[protein] + ADP + H(+). It catalyses the reaction L-threonyl-[protein] + ATP = O-phospho-L-threonyl-[protein] + ADP + H(+). This chain is Probable serine/threonine-protein kinase pdkA (pdkA), found in Dictyostelium discoideum (Social amoeba).